We begin with the raw amino-acid sequence, 314 residues long: Aspartate carbamoyltransferase catalytic subunit (314 aa).

Positions 55 and 56 each coordinate carbamoyl phosphate. Residue lysine 83 coordinates L-aspartate. Arginine 105, histidine 139, and glutamine 142 together coordinate carbamoyl phosphate. The L-aspartate site is built by arginine 172 and arginine 226. Carbamoyl phosphate contacts are provided by glycine 267 and proline 268.

It belongs to the aspartate/ornithine carbamoyltransferase superfamily. ATCase family. Heterododecamer (2C3:3R2) of six catalytic PyrB chains organized as two trimers (C3), and six regulatory PyrI chains organized as three dimers (R2).

The catalysed reaction is carbamoyl phosphate + L-aspartate = N-carbamoyl-L-aspartate + phosphate + H(+). It functions in the pathway pyrimidine metabolism; UMP biosynthesis via de novo pathway; (S)-dihydroorotate from bicarbonate: step 2/3. Catalyzes the condensation of carbamoyl phosphate and aspartate to form carbamoyl aspartate and inorganic phosphate, the committed step in the de novo pyrimidine nucleotide biosynthesis pathway. The protein is Aspartate carbamoyltransferase catalytic subunit of Rhodococcus erythropolis (strain PR4 / NBRC 100887).